The chain runs to 303 residues: Acetyltransferase ataH (303 aa).

The N-terminal stretch at 1 to 23 (MPTTAAFLRALYILTTLRGIGTS) is a signal peptide. The next 3 helical transmembrane spans lie at 42-62 (FLLHTLVIIAAKYLVLDMMTF), 194-214 (LVFAISSCLHLAIDGRAGIML), and 257-277 (GYIWTWAFLSLVAPMYNFPLF).

This sequence belongs to the wax synthase family.

The protein localises to the membrane. It functions in the pathway mycotoxin biosynthesis. Its function is as follows. Acetyltransferase; part of the gene cluster that mediates the biosynthesis of acetylaranotin, a member of the epipolythiodioxopiperazine (ETP) class of toxins characterized by a disulfide-bridged cyclic dipeptide. The first step of acetylaranotin biosynthesis is performed by the NRPS ataP which produces diketopiperazine cyclo-L-Phe-L-Phe via the condensation of 2 phenylalanines (L-Phe). The ataC domain of ataTC then catalyzes the formation of bishydroxylation of cyclo-L-Phe-L-Phe. The glutathione S-transferase domain ataG in ataIMG further catalyzes the conjugation of two glutathiones to the bishydroxylated intermediate. Next, the dipeptidase ataJ removes the Glu residues. The following step is performed by the carbon sulfur lyase domain ataI of ataIMG which may convert the bis-cysteinyl adduct to yield an epidithiol intermediate. The ataT domain from ataTC then catalyzes the oxidation of the free dithiols, followed by a cyclization step catalyzed by the cytochrome P450 ataF. AtaF probably acts as an epoxidase to promote a dual epoxidation formation at C8 and C9 along with C8' and C9', followed by the spontaneous nucleophilic attack of the amide nitrogens N10 and N10' to yield an intermediate with the pyrrolidine partial structure. The final steps of acetylaranotin biosynthesis involve the acetylation and ring rearrangement of an epitetrathiodiketopiperazine intermediate to produce acetylaranotin. AtaH probably catalyzes the acetylation of epitetrathiodiketopiperazine to produce a diacetate and ataY is responsible for the formation of the dihydrooxepin moiety that converts the diacetate intermediate to acetylaranotin via acetylapoaranotin. Both enzymes could function independently in the absence of the other. The acetylaranotin bis-thiomethyltransferase ataS located outside of acetylaranotin gene cluster is the main thiomethyltransferase responsible for converting acetylaranotin and its related intermediates to their methylated forms. This chain is Acetyltransferase ataH, found in Aspergillus terreus (strain NIH 2624 / FGSC A1156).